The primary structure comprises 102 residues: Small ribosomal subunit protein uS10 (102 aa).

Belongs to the universal ribosomal protein uS10 family. Part of the 30S ribosomal subunit.

Functionally, involved in the binding of tRNA to the ribosomes. The protein is Small ribosomal subunit protein uS10 of Parvibaculum lavamentivorans (strain DS-1 / DSM 13023 / NCIMB 13966).